A 268-amino-acid chain; its full sequence is Undecaprenyl-diphosphatase (268 aa).

Transmembrane regions (helical) follow at residues 41 to 61 (PGPSLSAIIQLGSVLALVCYF), 89 to 109 (IFIGTIPIILLGGTIKLFVPY), 114 to 134 (IFRSNLSIALVSFLMAILMYI), 155 to 175 (LIGLSQALAIFPGVSRSGVTI), 191 to 211 (FSFLLGMPAISFAAIVEFISS), 218 to 238 (FSFFPLIVGLTTTFLSSLLAI), and 248 to 268 (NGLKLFIIYRIVFGFVILLNL).

The protein belongs to the UppP family.

It is found in the cell inner membrane. It carries out the reaction di-trans,octa-cis-undecaprenyl diphosphate + H2O = di-trans,octa-cis-undecaprenyl phosphate + phosphate + H(+). Its function is as follows. Catalyzes the dephosphorylation of undecaprenyl diphosphate (UPP). Confers resistance to bacitracin. The chain is Undecaprenyl-diphosphatase from Prochlorococcus marinus (strain MIT 9312).